We begin with the raw amino-acid sequence, 519 residues long: Exodeoxyribonuclease 7 large subunit (519 aa).

Residues 493–519 (AISTGKSSNTNRKSAPAREPGKQGSLF) form a disordered region. A compositionally biased stretch (polar residues) spans 496 to 505 (TGKSSNTNRK).

This sequence belongs to the XseA family. In terms of assembly, heterooligomer composed of large and small subunits.

It is found in the cytoplasm. It carries out the reaction Exonucleolytic cleavage in either 5'- to 3'- or 3'- to 5'-direction to yield nucleoside 5'-phosphates.. In terms of biological role, bidirectionally degrades single-stranded DNA into large acid-insoluble oligonucleotides, which are then degraded further into small acid-soluble oligonucleotides. The protein is Exodeoxyribonuclease 7 large subunit of Chelativorans sp. (strain BNC1).